The following is a 175-amino-acid chain: Short chain dehydrogenase/reductase dpmpG (175 aa).

Isoleucine 18, aspartate 71, asparagine 98, and lysine 132 together coordinate NADP(+).

The protein belongs to the short-chain dehydrogenases/reductases (SDR) family.

Its pathway is secondary metabolite biosynthesis; terpenoid biosynthesis. Its function is as follows. Short chain dehydrogenase/reductase; part of the gene cluster that mediates the biosynthesis of diterpenoid pyrones. The first step of the pathway is the synthesis of the alpha-pyrone moiety by the polyketide synthase dpmpA via condensation of one acetyl-CoA starter unit with 3 malonyl-CoA units and 2 methylations. The alpha-pyrone is then combined with geranylgeranyl pyrophosphate (GGPP) formed by the GGPP synthase dpmpD through the action of the prenyltransferase dpmpC to yield a linear alpha-pyrone diterpenoid. Subsequent steps in the diterpenoid pyrone biosynthetic pathway involve the decalin core formation, which is initiated by the epoxidation of the C10-C11 olefin by the FAD-dependent oxidoreductase dpmpE, and is followed by a cyclization cascade catalyzed by the terpene cyclase dpmpB. The short chain dehydrogenase/reductase dpmpG then oxidizes the 8S hydroxy group to a ketone and the short chain dehydrogenase/reductase dpmpH reduces the ketone to the 8R hydroxy group to yield higginsianin B. Higginsianin B is further methylated by the methyltransferase dpmpI to produce the intermediate named FDDP B. The cytochrome P450 monooxygenase dpmpJ then oxidizes the C-26 methyl to primary alcohol, producing the final diterpenoid pyrone with a C-26 primary alcohol on the gamma-pyrone moiety named FDDP C. The polypeptide is Short chain dehydrogenase/reductase dpmpG (Macrophomina phaseolina (strain MS6) (Charcoal rot fungus)).